A 222-amino-acid polypeptide reads, in one-letter code: Peptide methionine sulfoxide reductase MsrA (222 aa).

The active site involves C60.

This sequence belongs to the MsrA Met sulfoxide reductase family.

The catalysed reaction is L-methionyl-[protein] + [thioredoxin]-disulfide + H2O = L-methionyl-(S)-S-oxide-[protein] + [thioredoxin]-dithiol. The enzyme catalyses [thioredoxin]-disulfide + L-methionine + H2O = L-methionine (S)-S-oxide + [thioredoxin]-dithiol. In terms of biological role, has an important function as a repair enzyme for proteins that have been inactivated by oxidation. Catalyzes the reversible oxidation-reduction of methionine sulfoxide in proteins to methionine. The polypeptide is Peptide methionine sulfoxide reductase MsrA (Pseudomonas putida (strain GB-1)).